Here is an 825-residue protein sequence, read N- to C-terminus: 5E5 antigen (825 aa).

A disordered region spans residues 126-825 (LSRDGYETET…RPRPSPKSPR (700 aa)). A compositionally biased stretch (pro residues) spans 157-180 (PRAPPEPPDPGAPRPPPDPGPLPL). The segment covering 191–200 (VQVSTEQLLM) has biased composition (polar residues). Residues 217–237 (TRGDRTQEGGEKPREQREGPR) show a composition bias toward basic and acidic residues. The span at 247-256 (QQEESPQQEP) shows a compositional bias: low complexity. Composition is skewed to basic and acidic residues over residues 257–277 (SSER…HEGE), 315–342 (VPKD…RDWT), and 392–406 (QERE…ESPR). A compositionally biased stretch (basic residues) spans 437–449 (RRPRKRRGRKGRM). Residues 455–477 (TTATSASATGGPAEEAGASAPEG) are compositionally biased toward low complexity. Positions 485 to 505 (GRARGPRQQARRRHGPQRRRG) are enriched in basic residues. A compositionally biased stretch (polar residues) spans 524–536 (GTTSGEQRADQSQ). Low complexity predominate over residues 537-562 (TLPALAGAPTAHAHAVPGPGPAAATL). The segment covering 565–575 (RGRRGSWRGGR) has biased composition (basic residues). Positions 576–588 (RGGGAGASGGGRG) are enriched in gly residues. Over residues 721–733 (FPPPPPTRPPPVL) the composition is skewed to pro residues. Positions 734 to 750 (LPLLRLTCAGDPGASRP) are enriched in low complexity.

Expressed in neurons.

Its subcellular location is the nucleus. In terms of biological role, might have DNA-binding ability. This is 5E5 antigen from Rattus norvegicus (Rat).